We begin with the raw amino-acid sequence, 364 residues long: Methylthioribose-1-phosphate isomerase (364 aa).

The active-site Proton donor is Asp254.

Belongs to the eIF-2B alpha/beta/delta subunits family. MtnA subfamily.

Its subcellular location is the cytoplasm. The protein resides in the nucleus. The catalysed reaction is 5-(methylsulfanyl)-alpha-D-ribose 1-phosphate = 5-(methylsulfanyl)-D-ribulose 1-phosphate. The protein operates within amino-acid biosynthesis; L-methionine biosynthesis via salvage pathway; L-methionine from S-methyl-5-thio-alpha-D-ribose 1-phosphate: step 1/6. Catalyzes the interconversion of methylthioribose-1-phosphate (MTR-1-P) into methylthioribulose-1-phosphate (MTRu-1-P). In Drosophila simulans (Fruit fly), this protein is Methylthioribose-1-phosphate isomerase.